A 269-amino-acid polypeptide reads, in one-letter code: Shikimate dehydrogenase (NADP(+)) (269 aa).

Shikimate contacts are provided by residues 14–16 (SKS) and Thr61. Residue Lys65 is the Proton acceptor of the active site. Glu77 lines the NADP(+) pocket. Shikimate-binding residues include Asn86 and Asp102. NADP(+)-binding positions include 126 to 130 (GAGGA), 149 to 154 (NRTLTK), and Met213. Tyr215 provides a ligand contact to shikimate. Gly238 is a binding site for NADP(+).

This sequence belongs to the shikimate dehydrogenase family. As to quaternary structure, homodimer.

The catalysed reaction is shikimate + NADP(+) = 3-dehydroshikimate + NADPH + H(+). The protein operates within metabolic intermediate biosynthesis; chorismate biosynthesis; chorismate from D-erythrose 4-phosphate and phosphoenolpyruvate: step 4/7. Functionally, involved in the biosynthesis of the chorismate, which leads to the biosynthesis of aromatic amino acids. Catalyzes the reversible NADPH linked reduction of 3-dehydroshikimate (DHSA) to yield shikimate (SA). The chain is Shikimate dehydrogenase (NADP(+)) from Actinobacillus succinogenes (strain ATCC 55618 / DSM 22257 / CCUG 43843 / 130Z).